The sequence spans 581 residues: Laccase-2 (581 aa).

Residues 1-19 (MKYSTVFTALTALFAQASA) form the signal peptide. 2 Plastocyanin-like domains span residues 74-191 (SVEN…GPAT) and 197-353 (DVGA…YDSS). Residues asparagine 77, asparagine 93, and asparagine 120 are each glycosylated (N-linked (GlcNAc...) asparagine). 4 residues coordinate Cu cation: histidine 125, histidine 127, histidine 169, and histidine 171. Cysteine 146 and cysteine 562 form a disulfide bridge. Asparagine 232, asparagine 283, asparagine 343, asparagine 408, asparagine 427, and asparagine 441 each carry an N-linked (GlcNAc...) asparagine glycan. The 135-residue stretch at 413–547 (LLDWSSPTTL…AMQFVESQSS (135 aa)) folds into the Plastocyanin-like 3 domain. 7 residues coordinate Cu cation: histidine 464, histidine 467, histidine 469, histidine 526, cysteine 527, histidine 528, and histidine 532.

Belongs to the multicopper oxidase family. Requires Cu cation as cofactor.

Its subcellular location is the secreted. The enzyme catalyses 4 hydroquinone + O2 = 4 benzosemiquinone + 2 H2O. Lignin degradation and detoxification of lignin-derived products. In Botryotinia fuckeliana (Noble rot fungus), this protein is Laccase-2 (lcc2).